The chain runs to 228 residues: Ribulose-phosphate 3-epimerase (228 aa).

Residue S11 participates in substrate binding. A divalent metal cation is bound by residues H36, D38, and H69. The Proton acceptor role is filled by D38. Substrate-binding positions include H69, 145–148 (GFCG), 180–182 (DGG), and 202–203 (AS). Residue D180 participates in a divalent metal cation binding. The active-site Proton donor is D180.

This sequence belongs to the ribulose-phosphate 3-epimerase family. The cofactor is a divalent metal cation.

It carries out the reaction D-ribulose 5-phosphate = D-xylulose 5-phosphate. Its pathway is carbohydrate degradation. Catalyzes the reversible epimerization of D-ribulose 5-phosphate to D-xylulose 5-phosphate. This is Ribulose-phosphate 3-epimerase from Chlamydia muridarum (strain MoPn / Nigg).